The chain runs to 110 residues: Holo-[acyl-carrier-protein] synthase (110 aa).

2 residues coordinate Mg(2+): aspartate 8 and glutamate 54.

It belongs to the P-Pant transferase superfamily. AcpS family. The cofactor is Mg(2+).

Its subcellular location is the cytoplasm. The enzyme catalyses apo-[ACP] + CoA = holo-[ACP] + adenosine 3',5'-bisphosphate + H(+). Functionally, transfers the 4'-phosphopantetheine moiety from coenzyme A to a Ser of acyl-carrier-protein. This is Holo-[acyl-carrier-protein] synthase from Mycoplasma mycoides subsp. mycoides SC (strain CCUG 32753 / NCTC 10114 / PG1).